The sequence spans 458 residues: tRNA modification GTPase MnmE (458 aa).

(6S)-5-formyl-5,6,7,8-tetrahydrofolate is bound by residues arginine 22, glutamate 85, and arginine 124. In terms of domain architecture, TrmE-type G spans 220–379; that stretch reads GLATAIIGRP…LEEAISRLFF (160 aa). Asparagine 230 contacts K(+). GTP contacts are provided by residues 230–235, 249–255, and 274–277; these read NVGKSS, TDIPGTT, and DTAG. Serine 234 serves as a coordination point for Mg(2+). Positions 249, 251, and 254 each coordinate K(+). Threonine 255 provides a ligand contact to Mg(2+). Position 458 (lysine 458) interacts with (6S)-5-formyl-5,6,7,8-tetrahydrofolate.

It belongs to the TRAFAC class TrmE-Era-EngA-EngB-Septin-like GTPase superfamily. TrmE GTPase family. As to quaternary structure, homodimer. Heterotetramer of two MnmE and two MnmG subunits. The cofactor is K(+).

The protein resides in the cytoplasm. Its function is as follows. Exhibits a very high intrinsic GTPase hydrolysis rate. Involved in the addition of a carboxymethylaminomethyl (cmnm) group at the wobble position (U34) of certain tRNAs, forming tRNA-cmnm(5)s(2)U34. The polypeptide is tRNA modification GTPase MnmE (Shouchella clausii (strain KSM-K16) (Alkalihalobacillus clausii)).